The sequence spans 131 residues: MTTKRKPYVRPMTSTWWKKLPFYRFYMVREGTAVPTVWFSIVLIYGLFALKHGADSWAGYIGFLQNPVVVILNLITLAAALLHTKTWFELAPKAANVIIKGEKMGPEPVIKGLWVVTAVVTVVILFVALFW.

Transmembrane regions (helical) follow at residues 30–50, 61–81, and 110–130; these read EGTA…LFAL, IGFL…AAAL, and IKGL…VALF.

The protein belongs to the FrdC family. As to quaternary structure, part of an enzyme complex containing four subunits: a flavoprotein (FrdA), an iron-sulfur protein (FrdB), and two hydrophobic anchor proteins (FrdC and FrdD).

The protein localises to the cell inner membrane. Its function is as follows. Two distinct, membrane-bound, FAD-containing enzymes are responsible for the catalysis of fumarate and succinate interconversion; fumarate reductase is used in anaerobic growth, and succinate dehydrogenase is used in aerobic growth. Anchors the catalytic components of the fumarate reductase complex to the cell inner membrane, binds quinones. The protein is Fumarate reductase subunit C of Klebsiella pneumoniae subsp. pneumoniae (strain ATCC 700721 / MGH 78578).